We begin with the raw amino-acid sequence, 32 residues long: U21-ctenitoxin-Co1a (32 aa).

Disulfide bonds link C3-C17, C10-C21, and C16-C30.

In terms of tissue distribution, expressed by the venom gland.

The protein localises to the secreted. Not toxic to mice by intracerebroventricular injection. This is U21-ctenitoxin-Co1a from Ctenus ornatus (Brazilian spider).